The primary structure comprises 39 residues: Potassium channel toxin alpha-KTx 2.18 (39 aa).

Disulfide bonds link Cys-7/Cys-29, Cys-13/Cys-34, and Cys-17/Cys-36. The residue at position 39 (Ile-39) is an Isoleucine amide.

Belongs to the short scorpion toxin superfamily. Potassium channel inhibitor family. Alpha-KTx 02 subfamily. In terms of tissue distribution, expressed by the venom gland.

It localises to the secreted. Functionally, weakly blocks Kv1.3/KCNA3 voltage-gated potassium channels. This is Potassium channel toxin alpha-KTx 2.18 from Centruroides limpidus (Mexican scorpion).